We begin with the raw amino-acid sequence, 254 residues long: Thiamine thiazole synthase (254 aa).

NAD(+)-binding positions include S36, 55–56 (EK), G63, V127, and 154–156 (HVD). Fe cation is bound by residues D156 and H171. M219 is a binding site for NAD(+). R229 contributes to the glycine binding site.

This sequence belongs to the THI4 family. In terms of assembly, homooctamer; tetramer of dimers. Fe(2+) serves as cofactor.

The catalysed reaction is hydrogen sulfide + glycine + NAD(+) = ADP-5-ethyl-4-methylthiazole-2-carboxylate + nicotinamide + 3 H2O + H(+). The protein operates within cofactor biosynthesis; thiamine diphosphate biosynthesis. Involved in the biosynthesis of the thiazole moiety of thiamine. Catalyzes the conversion of NAD and glycine to adenosine diphosphate 5-(2-hydroxyethyl)-4-methylthiazole-2-carboxylate (ADT), an adenylated thiazole intermediate, using free sulfide as a source of sulfur. The sequence is that of Thiamine thiazole synthase from Methanoculleus marisnigri (strain ATCC 35101 / DSM 1498 / JR1).